Here is a 502-residue protein sequence, read N- to C-terminus: Transmembrane prolyl 4-hydroxylase (502 aa).

Positions 1–29 are disordered; the sequence is MAAAAVTGQRPETAAAEEASRPQWAPPDH. The Cytoplasmic segment spans residues 1 to 60; the sequence is MAAAAVTGQRPETAAAEEASRPQWAPPDHCQAQAAAGLGDGEDAPVRPLCKPRGICSRAY. Residues 61–81 traverse the membrane as a helical; Signal-anchor for type II membrane protein segment; that stretch reads FLVLMVFVHLYLGNVLALLLF. Residues 82–502 are Lumenal-facing; the sequence is VHYSNGDESS…RAYRDARVEL (421 aa). The segment at 89-111 is disordered; that stretch reads ESSDPGPQHRAQGPGPEPTLGPL. EF-hand domains follow at residues 185–220 and 224–259; these read TMQV…GNGW and PESI…DFHK. The Ca(2+) site is built by Asp198, Asn200, Asp202, His204, Glu209, Asp237, Asp239, Asp241, and Glu248. The region spanning 310 to 460 is the Fe2OG dioxygenase domain; sequence LSEPLQVVRY…KWIANNWINV (151 aa). Residues His328 and Asp330 each coordinate Fe cation. N-linked (GlcNAc...) asparagine glycosylation is found at Asn348 and Asn368. Glu374 serves as a coordination point for Fe cation. The N-linked (GlcNAc...) asparagine glycan is linked to Asn382. A 2-oxoglutarate-binding site is contributed by Lys451.

As to quaternary structure, homodimer. It depends on Fe(2+) as a cofactor. Requires L-ascorbate as cofactor. Post-translationally, glycosylated. As to expression, widely expressed with highest levels in adult pancreas, heart, skeletal muscle, brain, placenta, kidney and adrenal gland. Expressed at lower levels in epiphyseal cartilage and in fibroblasts.

Its subcellular location is the endoplasmic reticulum membrane. It catalyses the reaction L-prolyl-[hypoxia-inducible factor alpha subunit] + 2-oxoglutarate + O2 = trans-4-hydroxy-L-prolyl-[hypoxia-inducible factor alpha subunit] + succinate + CO2. Its function is as follows. Catalyzes the post-translational formation of 4-hydroxyproline in hypoxia-inducible factor (HIF) alpha proteins. Hydroxylates HIF1A at 'Pro-402' and 'Pro-564'. May function as a cellular oxygen sensor and, under normoxic conditions, may target HIF through the hydroxylation for proteasomal degradation via the von Hippel-Lindau ubiquitination complex. The polypeptide is Transmembrane prolyl 4-hydroxylase (P4HTM) (Homo sapiens (Human)).